Consider the following 318-residue polypeptide: Methionyl-tRNA formyltransferase (318 aa).

112–115 (SLLP) is a binding site for (6S)-5,6,7,8-tetrahydrofolate.

This sequence belongs to the Fmt family.

The catalysed reaction is L-methionyl-tRNA(fMet) + (6R)-10-formyltetrahydrofolate = N-formyl-L-methionyl-tRNA(fMet) + (6S)-5,6,7,8-tetrahydrofolate + H(+). In terms of biological role, attaches a formyl group to the free amino group of methionyl-tRNA(fMet). The formyl group appears to play a dual role in the initiator identity of N-formylmethionyl-tRNA by promoting its recognition by IF2 and preventing the misappropriation of this tRNA by the elongation apparatus. The protein is Methionyl-tRNA formyltransferase of Mycobacterium leprae (strain Br4923).